The sequence spans 292 residues: Aquaporin-3 (292 aa).

At 1 to 24 (MGRQKELVSRCGEMLHIRYRLLRQ) the chain is on the cytoplasmic side. Residues 25-42 (ALAECLGTLILVMFGCGS) form a helical membrane-spanning segment. The Extracellular segment spans residues 43 to 56 (VAQVVLSRGTHGGF). The chain crosses the membrane as a helical span at residues 57–74 (LTINLAFGFAVTLGILIA). Topologically, residues 75–78 (GQVS) are cytoplasmic. The segment at residues 79–92 (GAHLNPAVTFAMCF) is an intramembrane region (discontinuously helical). Positions 83 to 85 (NPA) match the NPA 1 motif. Residues 93–100 (LAREPWIK) lie on the Cytoplasmic side of the membrane. A helical transmembrane segment spans residues 101–121 (LPIYTLAQTLGAFLGAGIVFG). Residues 122–159 (LYYDAIWHFADNQLFVSGPNGTAGIFATYPSGHLDMIN) are Extracellular-facing. N-linked (GlcNAc...) asparagine glycosylation is present at Asn-141. The helical transmembrane segment at 160–177 (GFFDQFIGTASLIVCVLA) threads the bilayer. Over 178 to 189 (IVDPYNNPVPRG) the chain is Cytoplasmic. Residues 190-206 (LEAFTVGLVVLVIGTSM) traverse the membrane as a helical segment. Topologically, residues 207–210 (GFNS) are extracellular. Residues 211 to 224 (GYAVNPARDFGPRL) constitute an intramembrane region (discontinuously helical). Residues 215-217 (NPA) carry the NPA 2 motif. Residues 225 to 242 (FTALAGWGSAVFTTGQHW) are Extracellular-facing. The chain crosses the membrane as a helical span at residues 243-264 (WWVPIVSPLLGSIAGVFVYQLM). Topologically, residues 265–292 (IGCHLEQPPPSNEEENVKLAHVKHKEQI) are cytoplasmic.

The protein belongs to the MIP/aquaporin (TC 1.A.8) family. Homotetramer; each monomer provides an independent glycerol/water pore. Could also exist in other oligomeric states. Widely expressed in epithelial cells of kidney (collecting ducts) and airways, in keratinocytes, immature dendritic cells and erythrocytes. Isoform 2 is not detectable in erythrocytes at the protein level.

It is found in the cell membrane. The protein localises to the basolateral cell membrane. The enzyme catalyses glycerol(in) = glycerol(out). It catalyses the reaction H2O(in) = H2O(out). The catalysed reaction is H2O2(out) = H2O2(in). It carries out the reaction urea(in) = urea(out). Glycerol transport is regulated by pH, with the porin being permeable to glycerol at pH 7.4 but not at pH 5.5. Water permeability, however, is not influenced by pH. Its function is as follows. Aquaglyceroporins form homotetrameric transmembrane channels, with each monomer independently mediating glycerol and water transport across the plasma membrane along their osmotic gradient. Could also be permeable to urea. Also participates in cell permeability to H2O2 and H2O2-mediated signaling. In skin, transports glycerol to the epidermis and stratum corneum, where it maintains hydration, elasticity, and supports lipid biosynthesis for barrier repair. In kidney, contributes to the reabsorption of water, helping the body maintain proper fluid balance. The chain is Aquaporin-3 from Homo sapiens (Human).